Reading from the N-terminus, the 259-residue chain is MQQMVPASGYDRAITIFSPEGRLYQVEYAREAVRRGTTAVGIKCNDGVVLAVDRRITSKLIDVSSIEKIFQIDDHIVAATSGLVADARVLIDRARLEAQMNRISYGEAITVEALAKKICDIKQAYTQHGGARPFGLALLITGIDRHSARLFETDPSGALIEYKATAIGSGRPIAMEVLESKYDENMIVSEGMELALYALSKTTEELKPENIDMAIVKDSGKLVEKISVDEIEKIVKAVYKKVEAEEAEAEKNKVEEDIE.

This sequence belongs to the peptidase T1A family. As to quaternary structure, the 20S proteasome core is composed of 14 alpha and 14 beta subunits that assemble into four stacked heptameric rings, resulting in a barrel-shaped structure. The two inner rings, each composed of seven catalytic beta subunits, are sandwiched by two outer rings, each composed of seven alpha subunits. The catalytic chamber with the active sites is on the inside of the barrel. Has a gated structure, the ends of the cylinder being occluded by the N-termini of the alpha-subunits. Is capped at one or both ends by the proteasome regulatory ATPase, PAN.

The protein localises to the cytoplasm. Its activity is regulated as follows. The formation of the proteasomal ATPase PAN-20S proteasome complex, via the docking of the C-termini of PAN into the intersubunit pockets in the alpha-rings, triggers opening of the gate for substrate entry. Interconversion between the open-gate and close-gate conformations leads to a dynamic regulation of the 20S proteasome proteolysis activity. In terms of biological role, component of the proteasome core, a large protease complex with broad specificity involved in protein degradation. This chain is Proteasome subunit alpha, found in Methanococcus maripaludis (strain C6 / ATCC BAA-1332).